A 371-amino-acid chain; its full sequence is Peptide chain release factor 2 (371 aa).

An N5-methylglutamine modification is found at Gln-250.

It belongs to the prokaryotic/mitochondrial release factor family. Methylated by PrmC. Methylation increases the termination efficiency of RF2.

Its subcellular location is the cytoplasm. In terms of biological role, peptide chain release factor 2 directs the termination of translation in response to the peptide chain termination codons UGA and UAA. In Paramagnetospirillum magneticum (strain ATCC 700264 / AMB-1) (Magnetospirillum magneticum), this protein is Peptide chain release factor 2.